A 131-amino-acid chain; its full sequence is uncharacterized protein (131 aa).

The interval 101-131 (SWWPPSGVVRGGPSSWPPSGVAEPREALGLP) is disordered.

This is an uncharacterized protein from Homo sapiens (Human).